The chain runs to 390 residues: 5-hydroxytryptamine receptor 1B (390 aa).

The tract at residues 1–21 (MEETGAQCAPPPPAGSQTGVS) is disordered. Residues 1–46 (MEETGAQCAPPPPAGSQTGVSQVNLSAAPSHNCSTEGYVYQDSVAL) lie on the Extracellular side of the membrane. Residues Asn-24 and Asn-32 are each glycosylated (N-linked (GlcNAc...) asparagine). The helical transmembrane segment at 47 to 72 (PWKVLLVVLLALITLATTLSNAFVIA) threads the bilayer. Residues 73-86 (TVYRTRKLHTPANY) are Cytoplasmic-facing. A helical membrane pass occupies residues 87-111 (LIASLAVTDLLVSILVMPISTMYVV). Over 112-119 (TGRWTLGQ) the chain is Extracellular. A helical membrane pass occupies residues 120–145 (VVCDFWLSSDITCCTASILHLCVIAL). An intrachain disulfide couples Cys-122 to Cys-199. Ergotamine is bound by residues Asp-129 and Thr-134. A DRY motif; important for ligand-induced conformation changes and signaling motif is present at residues 146–148 (DRY). The Cytoplasmic segment spans residues 146–165 (DRYWAITDAVEYSAKRTPKR). A helical membrane pass occupies residues 166-184 (AAVMIALVWVFSISISLPP). Over 185–205 (FFWRQAKAEEEVLDCLVNTDH) the chain is Extracellular. Val-201 is a binding site for ergotamine. Residues 206-229 (ILYTVYSTVGAFYFPTLLLIALYS) form a helical membrane-spanning segment. Over 230–315 (RIYVEARSRI…AARERKATKT (86 aa)) the chain is Cytoplasmic. The tract at residues 251–282 (LTRAQLMTDSPGSTSSVTSINSRAPDVPSESG) is disordered. The span at 255-272 (QLMTDSPGSTSSVTSINS) shows a compositional bias: polar residues. A helical transmembrane segment spans residues 316-337 (LGIILGAFIVCWLPFFIISLVM). At 338–347 (PICKDACWFH) the chain is on the extracellular side. The helical transmembrane segment at 348–370 (LAIFDFFTWLGYLNSLINPIIYT) threads the bilayer. The short motif at 365–369 (NPIIY) is the NPxxY motif; important for ligand-induced conformation changes and signaling element. Topologically, residues 371–390 (MSNEDFKQAFHKLIRFKCAS) are cytoplasmic. A lipid anchor (S-palmitoyl cysteine) is attached at Cys-388.

The protein belongs to the G-protein coupled receptor 1 family. Homodimer. Heterodimer with HTR1D. In terms of processing, phosphorylated. Desensitization of the receptor may be mediated by its phosphorylation. Post-translationally, palmitoylated.

It localises to the cell membrane. Its function is as follows. G-protein coupled receptor for 5-hydroxytryptamine (serotonin). Also functions as a receptor for ergot alkaloid derivatives, various anxiolytic and antidepressant drugs and other psychoactive substances, such as lysergic acid diethylamide (LSD). Ligand binding causes a conformation change that triggers signaling via guanine nucleotide-binding proteins (G proteins) and modulates the activity of downstream effectors, such as adenylate cyclase. HTR1B is coupled to G(i)/G(o) G alpha proteins and mediates inhibitory neurotransmission by inhibiting adenylate cyclase activity. Arrestin family members inhibit signaling via G proteins and mediate activation of alternative signaling pathways. Regulates the release of 5-hydroxytryptamine, dopamine and acetylcholine in the brain, and thereby affects neural activity, nociceptive processing, pain perception, mood and behavior. Besides, plays a role in vasoconstriction of cerebral arteries. This Equus caballus (Horse) protein is 5-hydroxytryptamine receptor 1B (HTR1B).